Here is a 210-residue protein sequence, read N- to C-terminus: Outer-membrane lipoprotein carrier protein (210 aa).

A signal peptide spans 1–26 (MHMIRRAAGALAVFAVAALAAAPAWA).

Belongs to the LolA family. Monomer.

The protein resides in the periplasm. Participates in the translocation of lipoproteins from the inner membrane to the outer membrane. Only forms a complex with a lipoprotein if the residue after the N-terminal Cys is not an aspartate (The Asp acts as a targeting signal to indicate that the lipoprotein should stay in the inner membrane). This Bordetella pertussis (strain Tohama I / ATCC BAA-589 / NCTC 13251) protein is Outer-membrane lipoprotein carrier protein.